Here is a 100-residue protein sequence, read N- to C-terminus: Protein SAMBA (100 aa).

The interval 1–40 (MNGASPAHSLVSTTAVAGGGGSSGAAAGLDDFHFPPDIPS) is disordered.

Interacts with CDC27B and CYCA2-3. As to expression, expressed in embryos, germinating seeds, hypocotyls and pollen grains.

Its function is as follows. Plays an important role in organ size control. Acts as negative regulator of the anaphase-promoting complex/cyclosome (APC/C). Regulates cell proliferation during early development by targeting CYCA2-3 for APC/C-mediated degradation. Required for mitosis I during pollen microspore development. The protein is Protein SAMBA of Arabidopsis thaliana (Mouse-ear cress).